The primary structure comprises 189 residues: Parkinson disease protein 7 (189 aa).

At Ala-2 the chain carries N-acetylalanine. S-palmitoyl cysteine attachment occurs at residues Cys-46 and Cys-53. Tyr-67 is subject to Phosphotyrosine. Cys-106 functions as the Nucleophile in the catalytic mechanism. A Cysteine sulfinic acid (-SO2H); alternate modification is found at Cys-106. A lipid anchor (S-palmitoyl cysteine; alternate) is attached at Cys-106. Residue His-126 is part of the active site. Lys-130 is covalently cross-linked (Glycyl lysine isopeptide (Lys-Gly) (interchain with G-Cter in SUMO)). Lys-148 is modified (N6-acetyllysine). An N6-succinyllysine modification is found at Lys-182.

The protein belongs to the peptidase C56 family. In terms of assembly, homodimer. Binds EFCAB6/DJBP and PIAS2. Part of a ternary complex containing PARK7, EFCAB6/DJBP and AR. Interacts (via N-terminus) with OTUD7B. Interacts with BBS1, HIPK1, CLCF1 and MTERF. Forms a complex with PINK1 and PRKN. Interacts (via C-terminus) with NCF1; the interaction is enhanced by LPS and modulates NCF1 phosphorylation and membrane translocation. Interacts with NENF. The cofactor is Deglycase activity does not require glutathione as a cofactor, however, glycated glutathione constitutes a PARK7 substrate.. Post-translationally, sumoylated on Lys-130 by PIAS2 or PIAS4; which is enhanced after ultraviolet irradiation and essential for cell-growth promoting activity and transforming activity. In terms of processing, cys-106 is easily oxidized to sulfinic acid. Undergoes cleavage of a C-terminal peptide and subsequent activation of protease activity in response to oxidative stress. Highly expressed in pancreas, kidney, skeletal muscle, liver, testis and heart. Detected at slightly lower levels in placenta and brain (at protein level). Detected in astrocytes, Sertoli cells, spermatogonia, spermatids and spermatozoa. Expressed by pancreatic islets at higher levels than surrounding exocrine tissues.

Its subcellular location is the cell membrane. The protein localises to the cytoplasm. It is found in the nucleus. It localises to the membrane raft. The protein resides in the mitochondrion. Its subcellular location is the endoplasmic reticulum. It carries out the reaction N(omega)-(1-hydroxy-2-oxopropyl)-L-arginyl-[protein] + H2O = lactate + L-arginyl-[protein] + H(+). The enzyme catalyses N(6)-(1-hydroxy-2-oxopropyl)-L-lysyl-[protein] + H2O = lactate + L-lysyl-[protein] + H(+). It catalyses the reaction S-(1-hydroxy-2-oxopropyl)-L-cysteinyl-[protein] + H2O = lactate + L-cysteinyl-[protein] + H(+). The catalysed reaction is N(omega)-(1-hydroxy-2-oxoethyl)-L-arginyl-[protein] + H2O = L-arginyl-[protein] + glycolate + H(+). It carries out the reaction N(6)-(1-hydroxy-2-oxoethyl)-L-lysyl-[protein] + H2O = glycolate + L-lysyl-[protein] + H(+). The enzyme catalyses S-(1-hydroxy-2-oxoethyl)-L-cysteinyl-[protein] + H2O = glycolate + L-cysteinyl-[protein] + H(+). It catalyses the reaction N(2)-(1-hydroxy-2-oxopropyl)-dGTP + H2O = lactate + dGTP + H(+). The catalysed reaction is N(2)-(1-hydroxy-2-oxopropyl)-GTP + H2O = lactate + GTP + H(+). It carries out the reaction N(2)-(1-hydroxy-2-oxopropyl)-GDP + H2O = lactate + GDP + H(+). The enzyme catalyses N(2)-(1-hydroxy-2-oxopropyl)-GMP + H2O = lactate + GMP + H(+). It catalyses the reaction N(2)-(1-hydroxy-2-oxoethyl)-dGTP + H2O = dGTP + glycolate + H(+). The catalysed reaction is N(2)-(1-hydroxy-2-oxoethyl)-GTP + H2O = glycolate + GTP + H(+). It carries out the reaction N(2)-(1-hydroxy-2-oxoethyl)-GDP + H2O = glycolate + GDP + H(+). The enzyme catalyses N(2)-(1-hydroxy-2-oxoethyl)-GMP + H2O = glycolate + GMP + H(+). It catalyses the reaction an N(2)-(1-hydroxy-2-oxopropyl)-guanosine in RNA + H2O = a guanosine in RNA + lactate + H(+). The catalysed reaction is an N(2)-(1-hydroxy-2-oxopropyl)-2'-deoxyguanosine in DNA + H2O = a 2'-deoxyguanosine in DNA + lactate + H(+). It carries out the reaction an N(2)-(1-hydroxy-2-oxoethyl)-guanosine in RNA + H2O = a guanosine in RNA + glycolate + H(+). The enzyme catalyses an N(2)-(1-hydroxy-2-oxoethyl)-2'-deoxyguanosine in DNA + H2O = a 2'-deoxyguanosine in DNA + glycolate + H(+). Functionally, multifunctional protein with controversial molecular function which plays an important role in cell protection against oxidative stress and cell death acting as oxidative stress sensor and redox-sensitive chaperone and protease. It is involved in neuroprotective mechanisms like the stabilization of NFE2L2 and PINK1 proteins, male fertility as a positive regulator of androgen signaling pathway as well as cell growth and transformation through, for instance, the modulation of NF-kappa-B signaling pathway. Has been described as a protein and nucleotide deglycase that catalyzes the deglycation of the Maillard adducts formed between amino groups of proteins or nucleotides and reactive carbonyl groups of glyoxals. But this function is rebuted by other works. As a protein deglycase, repairs methylglyoxal- and glyoxal-glycated proteins, and releases repaired proteins and lactate or glycolate, respectively. Deglycates cysteine, arginine and lysine residues in proteins, and thus reactivates these proteins by reversing glycation by glyoxals. Acts on early glycation intermediates (hemithioacetals and aminocarbinols), preventing the formation of advanced glycation endproducts (AGE) that cause irreversible damage. Also functions as a nucleotide deglycase able to repair glycated guanine in the free nucleotide pool (GTP, GDP, GMP, dGTP) and in DNA and RNA. Is thus involved in a major nucleotide repair system named guanine glycation repair (GG repair), dedicated to reversing methylglyoxal and glyoxal damage via nucleotide sanitization and direct nucleic acid repair. Protects histones from adduction by methylglyoxal, controls the levels of methylglyoxal-derived argininine modifications on chromatin. Able to remove the glycations and restore histone 3, histone glycation disrupts both local and global chromatin architecture by altering histone-DNA interactions as well as histone acetylation and ubiquitination levels. Displays a very low glyoxalase activity that may reflect its deglycase activity. Eliminates hydrogen peroxide and protects cells against hydrogen peroxide-induced cell death. Required for correct mitochondrial morphology and function as well as for autophagy of dysfunctional mitochondria. Plays a role in regulating expression or stability of the mitochondrial uncoupling proteins SLC25A14 and SLC25A27 in dopaminergic neurons of the substantia nigra pars compacta and attenuates the oxidative stress induced by calcium entry into the neurons via L-type channels during pacemaking. Regulates astrocyte inflammatory responses, may modulate lipid rafts-dependent endocytosis in astrocytes and neuronal cells. In pancreatic islets, involved in the maintenance of mitochondrial reactive oxygen species (ROS) levels and glucose homeostasis in an age- and diet dependent manner. Protects pancreatic beta cells from cell death induced by inflammatory and cytotoxic setting. Binds to a number of mRNAs containing multiple copies of GG or CC motifs and partially inhibits their translation but dissociates following oxidative stress. Metal-binding protein able to bind copper as well as toxic mercury ions, enhances the cell protection mechanism against induced metal toxicity. In macrophages, interacts with the NADPH oxidase subunit NCF1 to direct NADPH oxidase-dependent ROS production, and protects against sepsis. The sequence is that of Parkinson disease protein 7 from Homo sapiens (Human).